The chain runs to 405 residues: Arginine biosynthesis bifunctional protein ArgJ (405 aa).

6 residues coordinate substrate: threonine 152, lysine 178, threonine 189, glutamate 276, asparagine 400, and threonine 405. The active-site Nucleophile is threonine 189.

This sequence belongs to the ArgJ family. Heterotetramer of two alpha and two beta chains.

It localises to the cytoplasm. The catalysed reaction is N(2)-acetyl-L-ornithine + L-glutamate = N-acetyl-L-glutamate + L-ornithine. It catalyses the reaction L-glutamate + acetyl-CoA = N-acetyl-L-glutamate + CoA + H(+). The protein operates within amino-acid biosynthesis; L-arginine biosynthesis; L-ornithine and N-acetyl-L-glutamate from L-glutamate and N(2)-acetyl-L-ornithine (cyclic): step 1/1. Its pathway is amino-acid biosynthesis; L-arginine biosynthesis; N(2)-acetyl-L-ornithine from L-glutamate: step 1/4. Catalyzes two activities which are involved in the cyclic version of arginine biosynthesis: the synthesis of N-acetylglutamate from glutamate and acetyl-CoA as the acetyl donor, and of ornithine by transacetylation between N(2)-acetylornithine and glutamate. This chain is Arginine biosynthesis bifunctional protein ArgJ, found in Pseudomonas fluorescens (strain ATCC BAA-477 / NRRL B-23932 / Pf-5).